We begin with the raw amino-acid sequence, 403 residues long: Aspartic endopeptidase PEP1 (403 aa).

The N-terminal stretch at 1 to 20 (MVQISQIGAVLAVCSTLTVA) is a signal peptide. Positions 21 to 67 (APTKGKARFNVPQVAVPMKAVHHPAVAYARALHKFGMKVPKAVSDAA) are cleaved as a propeptide — activation peptide. The Peptidase A1 domain occupies 82–400 (YVTQVTVGQG…DTEGPRIGFA (319 aa)). Residue Asp98 is part of the active site. Asn159 and Asn270 each carry an N-linked (GlcNAc...) asparagine glycan. Residue Asp293 is part of the active site. Cys329 and Cys361 are oxidised to a cystine.

The protein belongs to the peptidase A1 family.

It is found in the secreted. The catalysed reaction is Hydrolysis of proteins with broad specificity. Generally favors hydrophobic residues in P1 and P1', but also accepts Lys in P1, which leads to activation of trypsinogen. Does not clot milk.. In terms of biological role, secreted aspartic endopeptidase that allows assimilation of proteinaceous substrates. Can catalyze hydrolysis of the major structural proteins of basement membrane, elastin, collagen, and laminin. Thought to play a significant role in virulence. Functionally, can catalyze hydrolysis of the major structural proteins of basement membrane, elastin, collagen, and laminin. Thought to play a significant role in virulence. The polypeptide is Aspartic endopeptidase PEP1 (PEP1) (Trichophyton verrucosum (strain HKI 0517)).